The chain runs to 134 residues: Ribosome-binding factor A (134 aa).

This sequence belongs to the RbfA family. In terms of assembly, monomer. Binds 30S ribosomal subunits, but not 50S ribosomal subunits or 70S ribosomes.

It is found in the cytoplasm. Functionally, one of several proteins that assist in the late maturation steps of the functional core of the 30S ribosomal subunit. Associates with free 30S ribosomal subunits (but not with 30S subunits that are part of 70S ribosomes or polysomes). Required for efficient processing of 16S rRNA. May interact with the 5'-terminal helix region of 16S rRNA. In Psychrobacter cryohalolentis (strain ATCC BAA-1226 / DSM 17306 / VKM B-2378 / K5), this protein is Ribosome-binding factor A.